The primary structure comprises 293 residues: MALVSADSRIAELLTELHQLIKQTQEERSRSEHNLVNIQKTHERMQTENKISPYYRTKLRGLYTTAKTDAEAECNILRKALDKIAEIKSLLEERRIAAKIAGLYNDSEPPRKTMRRGVLMTLLQQSAMTLPLWIGKPGDKPPPLCGAIPASGDYVAKPGDKVAARVKAVEGDEQWILAEVVSYSHATNKYEVDDIDEEGKERHTLSRRRIIPLPQWKANPETDPEALFQKEQLVLALYPQTTCFYRALIHTPPQRPQDDYSVLFEDTSYADGYSPPLNVAQRYVVACKEPKKK.

Positions 3 to 86 (LVSADSRIAE…LRKALDKIAE (84 aa)) form a coiled coil. The 142-residue stretch at 152-293 (GDYVAKPGDK…VVACKEPKKK (142 aa)) folds into the SGF29 C-terminal domain. 2 histone H3K4me3 N-terminus binding regions span residues 194–196 (DID) and 240–243 (QTTC). The segment at 264–266 (FED) is histone H3K4me3 binding. Residue lysine 288 is modified to N6-acetyllysine.

It belongs to the SGF29 family. As to quaternary structure, interacts with dimethylated and trimethylated 'Lys-4' of histone H3 (H3K4me2 and H3K4me3), with a preference for the trimethylated form (H3K4me3). Component of some SAGA-type complexes. Component of the ADA2A-containing complex (ATAC), composed of KAT14, KAT2A, TADA2L, TADA3L, ZZ3, MBIP, WDR5, YEATS2, CCDC101 and DR1. Interacts with (methylated) CGAS. Interacts with TADA3L, GCN5L2, SUPT3H and MYC.

The protein resides in the nucleus. Its function is as follows. Chromatin reader component of some histone acetyltransferase (HAT) SAGA-type complexes like the TFTC-HAT, ATAC or STAGA complexes. SGF29 specifically recognizes and binds methylated 'Lys-4' of histone H3 (H3K4me), with a preference for trimethylated form (H3K4me3). In the SAGA-type complexes, SGF29 is required to recruit complexes to H3K4me. Involved in the response to endoplasmic reticulum (ER) stress by recruiting the SAGA complex to H3K4me, thereby promoting histone H3 acetylation and cell survival. Also binds non-histone proteins that are methylated on Lys residues: specifically recognizes and binds CGAS monomethylated on 'Lys-491'. In Mus musculus (Mouse), this protein is SAGA-associated factor 29.